Here is a 1316-residue protein sequence, read N- to C-terminus: Myosin-5 (1316 aa).

Basic residues predominate over residues 1–12 (MAIVKRGGRTKT). Positions 1–29 (MAIVKRGGRTKTKQQQVPAKSSGGGSSGG) are disordered. The Myosin motor domain maps to 43 to 731 (VGVSDLTLLS…TLFALEDMRD (689 aa)). Residue 136-143 (GESGAGKT) participates in ATP binding. At Ser366 the chain carries Phosphoserine. The tract at residues 414-497 (SIGILDIYGF…PGLFAALNDS (84 aa)) is actin-binding. 2 consecutive IQ domains span residues 735-755 (HNMA…KEDA) and 756-781 (AKTI…YGNG). One can recognise a TH1 domain in the interval 789 to 981 (RRRMSMLGSR…TVSVKQGLPA (193 aa)). Disordered regions lie at residues 964-1154 (NGDH…PTLV) and 1209-1316 (DYLK…DDDW). 2 stretches are compositionally biased toward polar residues: residues 971 to 984 (GTVS…ASSK) and 1018 to 1030 (PRYN…ANSG). Over residues 1042–1065 (QPQQYQPQQSQQQTPYPTQSSIPS) the composition is skewed to low complexity. A compositionally biased stretch (polar residues) spans 1097–1106 (SPTQQRQTPA). The segment covering 1117–1129 (ASTTIATTTSHTS) has biased composition (low complexity). Residues 1137 to 1153 (PAPPVKKTAPPPPPPTL) are compositionally biased toward pro residues. The SH3 domain occupies 1156 to 1216 (PKFPTYKAMF…PIDYLKECSP (61 aa)). Positions 1223-1232 (APPPPPPPPA) are enriched in pro residues. Residues 1233–1268 (ATASAGANGASNPISTTTSTNTTTSSHTTNATSNGS) are compositionally biased toward low complexity. A compositionally biased stretch (acidic residues) spans 1305 to 1316 (SDDEEEEDDDDW).

This sequence belongs to the TRAFAC class myosin-kinesin ATPase superfamily. Myosin family. Phosphorylation of the TEDS site (Ser-366) is required for the polarization of the actin cytoskeleton. Phosphorylation probably activates the myosin-I ATPase activity.

It is found in the cytoplasm. Its subcellular location is the cytoskeleton. The protein resides in the actin patch. Functionally, type-I myosin implicated in the organization of the actin cytoskeleton. Required for proper actin cytoskeleton polarization and for the internalization step in endocytosis. At the cell cortex, assembles in patch-like structures together with proteins from the actin-polymerizing machinery and promotes actin assembly. Functions as actin nucleation-promoting factor (NPF) for the Arp2/3 complex. Plays a role in chitin deposition in the cell wall, in determination of the budding pattern, and is required for hyphae formation. This chain is Myosin-5 (MYO5), found in Candida albicans (strain SC5314 / ATCC MYA-2876) (Yeast).